We begin with the raw amino-acid sequence, 285 residues long: RNA polymerase sigma factor RpoH (285 aa).

The interval 53-122 (LILSHLRFVV…IHEYVLRNWR (70 aa)) is sigma-70 factor domain-2. Positions 77–80 (DLIQ) match the Interaction with polymerase core subunit RpoC motif. The segment at 229–281 (AMEGLDERSQDIIRARWLDEDNKSTLQELADRYGVSAERVRQLEKNAMKKLRA) is sigma-70 factor domain-4. A DNA-binding region (H-T-H motif) is located at residues 254–273 (LQELADRYGVSAERVRQLEK).

Belongs to the sigma-70 factor family. RpoH subfamily. Interacts with the RNA polymerase core enzyme.

Its subcellular location is the cytoplasm. Functionally, sigma factors are initiation factors that promote the attachment of RNA polymerase to specific initiation sites and are then released. This sigma factor is involved in regulation of expression of heat shock genes. The chain is RNA polymerase sigma factor RpoH from Enterobacter cloacae.